The chain runs to 132 residues: Small ribosomal subunit protein uS8 (132 aa).

It belongs to the universal ribosomal protein uS8 family. Part of the 30S ribosomal subunit. Contacts proteins S5 and S12.

One of the primary rRNA binding proteins, it binds directly to 16S rRNA central domain where it helps coordinate assembly of the platform of the 30S subunit. This chain is Small ribosomal subunit protein uS8, found in Geobacillus sp. (strain WCH70).